We begin with the raw amino-acid sequence, 354 residues long: Histidinol-phosphate aminotransferase (354 aa).

At K210 the chain carries N6-(pyridoxal phosphate)lysine.

It belongs to the class-II pyridoxal-phosphate-dependent aminotransferase family. Histidinol-phosphate aminotransferase subfamily. As to quaternary structure, homodimer. Pyridoxal 5'-phosphate serves as cofactor.

It catalyses the reaction L-histidinol phosphate + 2-oxoglutarate = 3-(imidazol-4-yl)-2-oxopropyl phosphate + L-glutamate. Its pathway is amino-acid biosynthesis; L-histidine biosynthesis; L-histidine from 5-phospho-alpha-D-ribose 1-diphosphate: step 7/9. In Clostridium botulinum (strain Kyoto / Type A2), this protein is Histidinol-phosphate aminotransferase.